The following is a 508-amino-acid chain: Lysine--tRNA ligase (508 aa).

Mg(2+) contacts are provided by Glu-418 and Glu-425.

The protein belongs to the class-II aminoacyl-tRNA synthetase family. In terms of assembly, homodimer. The cofactor is Mg(2+).

The protein resides in the cytoplasm. It catalyses the reaction tRNA(Lys) + L-lysine + ATP = L-lysyl-tRNA(Lys) + AMP + diphosphate. The sequence is that of Lysine--tRNA ligase from Burkholderia pseudomallei (strain 1710b).